The chain runs to 260 residues: Ribonuclease HII (260 aa).

The RNase H type-2 domain maps to 71–259 (ELVAGVDEVG…VHDAIVNKKN (189 aa)). A divalent metal cation-binding residues include Asp-77, Glu-78, and Asp-169.

Belongs to the RNase HII family. It depends on Mn(2+) as a cofactor. Mg(2+) serves as cofactor.

Its subcellular location is the cytoplasm. The catalysed reaction is Endonucleolytic cleavage to 5'-phosphomonoester.. Functionally, endonuclease that specifically degrades the RNA of RNA-DNA hybrids. This is Ribonuclease HII from Leuconostoc citreum (strain KM20).